The following is a 62-amino-acid chain: DNA-directed RNA polymerase subunit Rpo10 (62 aa).

4 residues coordinate Zn(2+): C6, C9, C43, and C44.

The protein belongs to the archaeal Rpo10/eukaryotic RPB10 RNA polymerase subunit family. In terms of assembly, part of the RNA polymerase complex. Requires Zn(2+) as cofactor.

The protein resides in the cytoplasm. The enzyme catalyses RNA(n) + a ribonucleoside 5'-triphosphate = RNA(n+1) + diphosphate. DNA-dependent RNA polymerase (RNAP) catalyzes the transcription of DNA into RNA using the four ribonucleoside triphosphates as substrates. The polypeptide is DNA-directed RNA polymerase subunit Rpo10 (Methanosarcina acetivorans (strain ATCC 35395 / DSM 2834 / JCM 12185 / C2A)).